The following is a 492-amino-acid chain: Probable small intestine urate exporter (492 aa).

The tract at residues Met-1–Thr-20 is disordered. Asn-18, Asn-44, Asn-53, Asn-63, Asn-72, and Asn-87 each carry an N-linked (GlcNAc...) asparagine glycan. Transmembrane regions (helical) follow at residues Leu-112–Ala-132, Tyr-134–Ala-154, Ala-156–Leu-176, Ile-198–Cys-218, Tyr-225–Val-245, Leu-287–Met-307, Ile-327–Ala-347, Lys-363–Val-383, Phe-393–Leu-413, Leu-426–Ile-446, and Asn-456–Ser-476.

It belongs to the major facilitator superfamily. Sodium/anion cotransporter family. As to expression, expressed in the small intestine (at protein level).

The protein localises to the apical cell membrane. The catalysed reaction is 3 Na(+)(out) + phosphate(out) = 3 Na(+)(in) + phosphate(in). It catalyses the reaction urate(out) + n chloride(in) = urate(in) + n chloride(out). The enzyme catalyses L-thyroxine(out) = L-thyroxine(in). It carries out the reaction 3,3',5-triiodo-L-thyronine(out) = 3,3',5-triiodo-L-thyronine(in). Acts as a membrane potential-dependent organic anion transporter, the transport requires a low concentration of chloride ions. Mediates chloride-dependent transport of urate. Mediates sodium-independent high affinity transport of thyroid hormones including L-thyroxine (T4) and 3,3',5-triiodo-L-thyronine (T3). Can actively transport inorganic phosphate into cells via Na(+) cotransport. The chain is Probable small intestine urate exporter (Slc17a4) from Mus musculus (Mouse).